The chain runs to 116 residues: MNLVISILAITIILSSILAVVSFWLPQMNPDAEKLSPYECGFDPLGSARLPFSIRFFLVAILFLLFDLEIALLLALPWGDQLYSATGTFFWATAVLILLTLGLIYEWTQGGLEWAE.

The next 3 helical transmembrane spans lie at 3 to 23 (LVISILAITIILSSILAVVSF), 56 to 76 (FFLVAILFLLFDLEIALLLAL), and 85 to 105 (ATGTFFWATAVLILLTLGLIY).

The protein belongs to the complex I subunit 3 family.

It is found in the mitochondrion membrane. The catalysed reaction is a ubiquinone + NADH + 5 H(+)(in) = a ubiquinol + NAD(+) + 4 H(+)(out). Its function is as follows. Core subunit of the mitochondrial membrane respiratory chain NADH dehydrogenase (Complex I) that is believed to belong to the minimal assembly required for catalysis. Complex I functions in the transfer of electrons from NADH to the respiratory chain. The immediate electron acceptor for the enzyme is believed to be ubiquinone. This is NADH-ubiquinone oxidoreductase chain 3 (MT-ND3) from Formosania lacustris (Oriental stream loach).